The following is a 287-amino-acid chain: Thioredoxin-related transmembrane protein 2 (287 aa).

A signal peptide spans 1 to 13 (MAVLAPLLAVLYA). The Extracellular segment spans residues 14–112 (APGLLRWVSQ…ILFFRLDLRM (99 aa)). Residues 113–133 (GLLYITLCIVFLMTCKPPLYL) traverse the membrane as a helical segment. Residues 134–287 (GPEHIKYFSD…NEWNDGKKDQ (154 aa)) lie on the Cytoplasmic side of the membrane. Residues 137–209 (HIKYFSDKTL…PEVSCRYSIS (73 aa)) form the Thioredoxin domain. The short motif at 284–287 (KKDQ) is the Di-lysine motif element.

As to quaternary structure, monomer. Homodimer; disulfide-linked. Occurs in both reduced and oxidized monomeric form. Oxidative conditions increase homodimerization.

The protein localises to the endoplasmic reticulum membrane. It is found in the mitochondrion membrane. Its function is as follows. Endoplasmic reticulum and mitochondria-associated protein that probably functions as a regulator of cellular redox state and thereby regulates protein post-translational modification, protein folding and mitochondrial activity. The sequence is that of Thioredoxin-related transmembrane protein 2 (tmx2) from Xenopus laevis (African clawed frog).